A 202-amino-acid polypeptide reads, in one-letter code: Na(+)-translocating NADH-quinone reductase subunit E (202 aa).

6 helical membrane-spanning segments follow: residues 11–31 (AVFI…FIAI), 35–55 (VETA…TVPA), 79–99 (LSFL…QILE), 114–134 (GVFL…LFMV), 144–164 (VVYG…LAGI), and 180–200 (LGIT…FSGV).

It belongs to the NqrDE/RnfAE family. As to quaternary structure, composed of six subunits; NqrA, NqrB, NqrC, NqrD, NqrE and NqrF.

The protein resides in the cell inner membrane. It catalyses the reaction a ubiquinone + n Na(+)(in) + NADH + H(+) = a ubiquinol + n Na(+)(out) + NAD(+). Its function is as follows. NQR complex catalyzes the reduction of ubiquinone-1 to ubiquinol by two successive reactions, coupled with the transport of Na(+) ions from the cytoplasm to the periplasm. NqrA to NqrE are probably involved in the second step, the conversion of ubisemiquinone to ubiquinol. In Stutzerimonas stutzeri (strain A1501) (Pseudomonas stutzeri), this protein is Na(+)-translocating NADH-quinone reductase subunit E.